A 204-amino-acid polypeptide reads, in one-letter code: Probable GTP-binding protein EngB (204 aa).

The EngB-type G domain maps to 23-195 (TLPEIAFVGR…ASALMQLLAM (173 aa)). Residues 31–38 (GRSNVGKS), 58–62 (GRTRE), 76–79 (DLPG), 143–146 (TKID), and 174–176 (FSA) contribute to the GTP site. Mg(2+)-binding residues include Ser38 and Thr60.

Belongs to the TRAFAC class TrmE-Era-EngA-EngB-Septin-like GTPase superfamily. EngB GTPase family. The cofactor is Mg(2+).

Its function is as follows. Necessary for normal cell division and for the maintenance of normal septation. The sequence is that of Probable GTP-binding protein EngB from Gemmatimonas aurantiaca (strain DSM 14586 / JCM 11422 / NBRC 100505 / T-27).